The primary structure comprises 147 residues: Methylmalonyl-CoA mutase homolog (147 aa).

It to methylmalonyl-CoA mutase.

This is Methylmalonyl-CoA mutase homolog from Alkalihalophilus pseudofirmus (strain ATCC BAA-2126 / JCM 17055 / OF4) (Bacillus pseudofirmus).